A 685-amino-acid polypeptide reads, in one-letter code: DNA-directed RNA polymerase subunit beta' (685 aa).

Zn(2+) contacts are provided by C69, C71, C87, and C90. Mg(2+) is bound by residues D489, D491, and D493.

It belongs to the RNA polymerase beta' chain family. RpoC1 subfamily. As to quaternary structure, in plastids the minimal PEP RNA polymerase catalytic core is composed of four subunits: alpha, beta, beta', and beta''. When a (nuclear-encoded) sigma factor is associated with the core the holoenzyme is formed, which can initiate transcription. Requires Mg(2+) as cofactor. Zn(2+) serves as cofactor.

The protein localises to the plastid. Its subcellular location is the chloroplast. The catalysed reaction is RNA(n) + a ribonucleoside 5'-triphosphate = RNA(n+1) + diphosphate. Functionally, DNA-dependent RNA polymerase catalyzes the transcription of DNA into RNA using the four ribonucleoside triphosphates as substrates. The chain is DNA-directed RNA polymerase subunit beta' from Buxus microphylla (Littleleaf boxwood).